Consider the following 186-residue polypeptide: Small ribosomal subunit protein uS7 (186 aa).

This sequence belongs to the universal ribosomal protein uS7 family. Part of the 30S ribosomal subunit.

Functionally, one of the primary rRNA binding proteins, it binds directly to 16S rRNA where it nucleates assembly of the head domain of the 30S subunit. Is located at the subunit interface close to the decoding center. The polypeptide is Small ribosomal subunit protein uS7 (Methanococcoides burtonii (strain DSM 6242 / NBRC 107633 / OCM 468 / ACE-M)).